A 252-amino-acid chain; its full sequence is TVP38/TMEM64 family membrane protein Mb1528c (252 aa).

The next 6 helical transmembrane spans lie at 32–52 (IVGT…VPVP), 64–84 (LGAW…VPPF), 88–108 (AFTL…IAVV), 149–169 (WLAI…INYA), 177–197 (ILSF…AVVI), and 209–229 (LLIL…VYEI).

It belongs to the TVP38/TMEM64 family.

It localises to the cell membrane. This Mycobacterium bovis (strain ATCC BAA-935 / AF2122/97) protein is TVP38/TMEM64 family membrane protein Mb1528c.